A 107-amino-acid chain; its full sequence is Large ribosomal subunit protein uL24 (107 aa).

Belongs to the universal ribosomal protein uL24 family. Part of the 50S ribosomal subunit.

Functionally, one of two assembly initiator proteins, it binds directly to the 5'-end of the 23S rRNA, where it nucleates assembly of the 50S subunit. In terms of biological role, one of the proteins that surrounds the polypeptide exit tunnel on the outside of the subunit. This is Large ribosomal subunit protein uL24 from Streptomyces griseus subsp. griseus (strain JCM 4626 / CBS 651.72 / NBRC 13350 / KCC S-0626 / ISP 5235).